The following is a 504-amino-acid chain: Xylose import ATP-binding protein XylG (504 aa).

2 consecutive ABC transporter domains span residues 5 to 242 (LEMK…VGRE) and 259 to 500 (LRVE…VMEA). Residue 37–44 (GENGSGKS) participates in ATP binding.

Belongs to the ABC transporter superfamily. Xylose importer (TC 3.A.1.2.4) family. In terms of assembly, the complex is composed of two ATP-binding proteins (XylG), two transmembrane proteins (XylH) and a solute-binding protein (XylF).

Its subcellular location is the cell inner membrane. The catalysed reaction is D-xylose(out) + ATP + H2O = D-xylose(in) + ADP + phosphate + H(+). In terms of biological role, part of the ABC transporter complex XylFGH involved in xylose import. Responsible for energy coupling to the transport system. In Histophilus somni (strain 129Pt) (Haemophilus somnus), this protein is Xylose import ATP-binding protein XylG.